Here is an 88-residue protein sequence, read N- to C-terminus: Small ribosomal subunit protein uS15c (88 aa).

It belongs to the universal ribosomal protein uS15 family. As to quaternary structure, part of the 30S ribosomal subunit.

It is found in the plastid. Its subcellular location is the chloroplast. This Crucihimalaya wallichii (Rock-cress) protein is Small ribosomal subunit protein uS15c (rps15).